The chain runs to 720 residues: Nucleoporin 88 (720 aa).

Residues 584–611 adopt a coiled-coil conformation; sequence LALCREDRKSLTEAAERLADKYEDAKYR.

In terms of tissue distribution, widely expressed. Higher levels of expression are detected in highly proliferative frontal regions of the embryo, e.g. brain, eye and anterior trunk.

Its subcellular location is the nucleus. The protein resides in the nuclear pore complex. Component of the nuclear pore complex. The chain is Nucleoporin 88 from Danio rerio (Zebrafish).